Reading from the N-terminus, the 504-residue chain is Sphingosine-1-phosphate transporter SPNS2 (504 aa).

The next 11 membrane-spanning stretches (helical) occupy residues 48–70 (LLRC…LNYM), 94–114 (GLLQ…FGYL), 122–142 (IILS…SFIT), 182–202 (VMLS…YILG), 214–234 (WALR…LIFV), 269–289 (VFSS…GIWI), 317–337 (LIFG…GAVT), 351–371 (LVCA…FVVA), 375–395 (IVGA…NWAI), 415–435 (FQGF…IGLI), and 460–480 (LCPF…LFFL).

Belongs to the major facilitator superfamily. Spinster (TC 2.A.1.49) family.

Its subcellular location is the cell membrane. The protein localises to the endosome membrane. It catalyses the reaction sphing-4-enine 1-phosphate(in) = sphing-4-enine 1-phosphate(out). It carries out the reaction sphinganine 1-phosphate(in) = sphinganine 1-phosphate(out). Functionally, lipid transporter that specifically mediates export of sphingosine-1-phosphate (sphing-4-enine 1-phosphate, S1P) and sphinganine-1-phosphate, which play critical roles in regulating heart development. Mediates the export of S1P from cells in the extraembryonic yolk syncytial layer (YSL), thereby regulating myocardial precursor migration. The protein is Sphingosine-1-phosphate transporter SPNS2 of Danio rerio (Zebrafish).